The primary structure comprises 225 residues: Dehydrin DHN4 (225 aa).

The interval 1-78 (MEYQGQQHGR…EDDGMGGRRK (78 aa)) is disordered. Residues 21–39 (HGVGTGMGTHGGVGTGAAA) show a composition bias toward gly residues. 5 repeat units span residues 105 to 118 (YGQQGTGMAGTGGT), 119 to 136 (YGQQGHTGMTGMGATDGT), 137 to 159 (YGQQGHTGMAGTGAHGTAATGGT), 160 to 178 (YGQQGHTGMTGTGMHGTGG), and 179 to 199 (TYGQQGHTGMTGTGMHGTGGT). Residues 105–199 (YGQQGTGMAG…GTGMHGTGGT (95 aa)) are 5 X approximate tandem repeats.

This sequence belongs to the plant dehydrin family.

The sequence is that of Dehydrin DHN4 (DHN4) from Hordeum vulgare (Barley).